Reading from the N-terminus, the 452-residue chain is tRNA-2-methylthio-N(6)-dimethylallyladenosine synthase (452 aa).

An MTTase N-terminal domain is found at 5 to 121 (RRYHITTFGC…LADLLAQVEA (117 aa)). [4Fe-4S] cluster-binding residues include C14, C50, C84, C156, C160, and C163. The Radical SAM core domain occupies 142-379 (RDSTITAWVN…NHLVAQMAAD (238 aa)). The region spanning 382–446 (QRYLGRTEEV…AFSLTGQILS (65 aa)) is the TRAM domain.

This sequence belongs to the methylthiotransferase family. MiaB subfamily. In terms of assembly, monomer. The cofactor is [4Fe-4S] cluster.

The protein localises to the cytoplasm. The enzyme catalyses N(6)-dimethylallyladenosine(37) in tRNA + (sulfur carrier)-SH + AH2 + 2 S-adenosyl-L-methionine = 2-methylsulfanyl-N(6)-dimethylallyladenosine(37) in tRNA + (sulfur carrier)-H + 5'-deoxyadenosine + L-methionine + A + S-adenosyl-L-homocysteine + 2 H(+). Functionally, catalyzes the methylthiolation of N6-(dimethylallyl)adenosine (i(6)A), leading to the formation of 2-methylthio-N6-(dimethylallyl)adenosine (ms(2)i(6)A) at position 37 in tRNAs that read codons beginning with uridine. The polypeptide is tRNA-2-methylthio-N(6)-dimethylallyladenosine synthase (Synechococcus elongatus (strain ATCC 33912 / PCC 7942 / FACHB-805) (Anacystis nidulans R2)).